Here is a 322-residue protein sequence, read N- to C-terminus: Glucokinase (322 aa).

10-15 (GDIGGT) provides a ligand contact to ATP.

Belongs to the bacterial glucokinase family.

It is found in the cytoplasm. The catalysed reaction is D-glucose + ATP = D-glucose 6-phosphate + ADP + H(+). The polypeptide is Glucokinase (Hahella chejuensis (strain KCTC 2396)).